An 85-amino-acid polypeptide reads, in one-letter code: MDEIESSAVNAAASELRSIIERVERLEEEKAAIANDVKDVLGEAKGRGYDTKAIKTIIRLRKKDANERLEEETILQTYMAALGME.

This sequence belongs to the UPF0335 family.

The sequence is that of UPF0335 protein Oant_1161 from Brucella anthropi (strain ATCC 49188 / DSM 6882 / CCUG 24695 / JCM 21032 / LMG 3331 / NBRC 15819 / NCTC 12168 / Alc 37) (Ochrobactrum anthropi).